A 546-amino-acid chain; its full sequence is Chaperonin GroEL (546 aa).

ATP contacts are provided by residues 29-32 (TLGP), K50, 86-90 (DGTTT), G414, 477-479 (NAL), and D493.

The protein belongs to the chaperonin (HSP60) family. As to quaternary structure, forms a cylinder of 14 subunits composed of two heptameric rings stacked back-to-back. Interacts with the co-chaperonin GroES.

The protein resides in the cytoplasm. It carries out the reaction ATP + H2O + a folded polypeptide = ADP + phosphate + an unfolded polypeptide.. Functionally, together with its co-chaperonin GroES, plays an essential role in assisting protein folding. The GroEL-GroES system forms a nano-cage that allows encapsulation of the non-native substrate proteins and provides a physical environment optimized to promote and accelerate protein folding. This is Chaperonin GroEL from Leptospira interrogans serogroup Icterohaemorrhagiae serovar copenhageni (strain Fiocruz L1-130).